The following is a 373-amino-acid chain: 3-isopropylmalate dehydrogenase (373 aa).

Residue 82-93 (GPKWGTGALRPE) participates in NAD(+) binding. Arg100, Arg110, Arg139, and Asp231 together coordinate substrate. Asp231, Asp256, and Asp260 together coordinate Mg(2+). 295–306 (GSAPDLPANKVN) is a binding site for NAD(+).

The protein belongs to the isocitrate and isopropylmalate dehydrogenases family. In terms of assembly, homodimer. It depends on Mg(2+) as a cofactor. The cofactor is Mn(2+).

The protein resides in the cytoplasm. It catalyses the reaction (2R,3S)-3-isopropylmalate + NAD(+) = 4-methyl-2-oxopentanoate + CO2 + NADH. It functions in the pathway amino-acid biosynthesis; L-leucine biosynthesis; L-leucine from 3-methyl-2-oxobutanoate: step 3/4. Catalyzes the oxidation of 3-carboxy-2-hydroxy-4-methylpentanoate (3-isopropylmalate) to 3-carboxy-4-methyl-2-oxopentanoate. The product decarboxylates to 4-methyl-2 oxopentanoate. This Candida maltosa (Yeast) protein is 3-isopropylmalate dehydrogenase (LEU2).